The following is a 709-amino-acid chain: Protein transport protein SEC39 (709 aa).

The protein belongs to the SEC39 family. As to quaternary structure, component of a peripheral membrane protein complex consisting of DSL1, SEC39/DSL3 and TIP20. Bound to a SNARE complex consisting of UFE1, USE1, SEC20 and SEC22 or YKT6 through direct interaction of TIP20 with SEC20. Interacts with TIP20 and DSL1.

Its subcellular location is the endoplasmic reticulum membrane. Its function is as follows. Required for protein transport between the Golgi and the endoplasmic reticulum. May contribute to tethering of coatomer-coated retrograde transport vesicles to the ER membrane through interaction with and stabilization of the SNARE complex. This is Protein transport protein SEC39 from Saccharomyces cerevisiae (strain ATCC 204508 / S288c) (Baker's yeast).